The primary structure comprises 463 residues: Annexin A7 (463 aa).

Pro residues-rich tracts occupy residues 1-18 and 26-38; these read MSYPGYPPTGYPPFPGYP and FPPPGQYPYPSGF. Disordered regions lie at residues 1–54 and 71–153; these read MSYP…SSGY and GYPG…THGT. Positions 1 to 140 are repeat-rich region; that stretch reads MSYPGYPPTG…QYPGGQSPYP (140 aa). Positions 5 to 20 are 3 X 5 AA tandem repeats of G-Y-P-P-X; that stretch reads GYPPTGYPPFPGYPPT. Over residues 86–99 the composition is skewed to gly residues; sequence GGQGFGAPPGGAGF. Annexin repeat units follow at residues 160 to 231, 232 to 303, 315 to 387, and 391 to 462; these read FDAM…ALFM, PSTY…SMCQ, QLAQ…TILQ, and NRPA…AIVG. An N6-acetyllysine modification is found at lysine 208.

It belongs to the annexin family. Interacts with PDCD6.

Calcium/phospholipid-binding protein which promotes membrane fusion and is involved in exocytosis. In Bos taurus (Bovine), this protein is Annexin A7 (ANXA7).